Consider the following 983-residue polypeptide: UPF0182 protein MLBr00644 (983 aa).

7 consecutive transmembrane segments (helical) span residues 19–39 (LIMV…LVDA), 63–83 (VVVF…GLAV), 113–133 (LIGV…AQSY), 175–195 (FVAV…FGGI), 210–230 (LQLV…YWLD), 259–279 (KLIL…AITL), and 287–307 (IGLV…PLIV).

The protein belongs to the UPF0182 family.

It localises to the cell membrane. This chain is UPF0182 protein MLBr00644, found in Mycobacterium leprae (strain Br4923).